Reading from the N-terminus, the 161-residue chain is Protein-export protein SecB (161 aa).

It belongs to the SecB family. As to quaternary structure, homotetramer, a dimer of dimers. One homotetramer interacts with 1 SecA dimer.

The protein resides in the cytoplasm. Functionally, one of the proteins required for the normal export of preproteins out of the cell cytoplasm. It is a molecular chaperone that binds to a subset of precursor proteins, maintaining them in a translocation-competent state. It also specifically binds to its receptor SecA. This is Protein-export protein SecB from Shewanella baltica (strain OS223).